A 249-amino-acid polypeptide reads, in one-letter code: Phosphomannomutase (249 aa).

Asp-15 functions as the Nucleophile in the catalytic mechanism. Asp-15 and Asp-17 together coordinate Mg(2+). The active-site Proton donor/acceptor is Asp-17. The alpha-D-mannose 1-phosphate site is built by Arg-24, Arg-126, Arg-137, Arg-144, Ser-182, and Asp-184. 3 residues coordinate Mg(2+): Asp-210, Phe-222, and Thr-227.

This sequence belongs to the eukaryotic PMM family. As to quaternary structure, homodimer. Requires Mg(2+) as cofactor. In terms of tissue distribution, expressed in roots, leaves, flag leaves and immature spikes.

The protein resides in the cytoplasm. It carries out the reaction alpha-D-mannose 1-phosphate = D-mannose 6-phosphate. Its pathway is nucleotide-sugar biosynthesis; GDP-alpha-D-mannose biosynthesis; alpha-D-mannose 1-phosphate from D-fructose 6-phosphate: step 2/2. Functionally, catalyzes the interconversion of mannose-6-phosphate to mannose-1-phosphate, the precursor for the synthesis of GDP-mannose. GDP-mannose is an essential sugar nucleotide for the synthesis of D-mannose-containing cell wall polysaccharides (galactomannans and glucomannans), glycolipids, glycoproteins and the antioxidant L-ascorbate. Can complement the yeast temperature-sensitive mutant sec53-6. The sequence is that of Phosphomannomutase from Triticum aestivum (Wheat).